An 80-amino-acid polypeptide reads, in one-letter code: Protein KorB (80 aa).

2 consecutive DNA-binding regions (H-T-H motif) follow at residues 13-32 and 56-75; these read AEAALKPLGQQRINVLAELD and NEVTAVAPNTARAWAKAEAE.

Repressor for the transcription of certain pIJ101 promoters, including those the from kilA and kilB loci. This chain is Protein KorB (korB), found in Streptomyces lividans.